We begin with the raw amino-acid sequence, 529 residues long: ATP synthase subunit alpha (529 aa).

Gly173 to Thr180 serves as a coordination point for ATP.

The protein belongs to the ATPase alpha/beta chains family. As to quaternary structure, F-type ATPases have 2 components, CF(1) - the catalytic core - and CF(0) - the membrane proton channel. CF(1) has five subunits: alpha(3), beta(3), gamma(1), delta(1), epsilon(1). CF(0) has three main subunits: a(1), b(2) and c(9-12). The alpha and beta chains form an alternating ring which encloses part of the gamma chain. CF(1) is attached to CF(0) by a central stalk formed by the gamma and epsilon chains, while a peripheral stalk is formed by the delta and b chains.

The protein localises to the cell membrane. It catalyses the reaction ATP + H2O + 4 H(+)(in) = ADP + phosphate + 5 H(+)(out). Produces ATP from ADP in the presence of a proton gradient across the membrane. The alpha chain is a regulatory subunit. The chain is ATP synthase subunit alpha from Streptomyces lividans.